Reading from the N-terminus, the 3957-residue chain is Ankyrin-2 (3957 aa).

Residues 1–14 (MMNEDAAQKSDSGE) are compositionally biased toward basic and acidic residues. A disordered region spans residues 1–34 (MMNEDAAQKSDSGEKFNGSSQRRKRPKKSDSNAS). ANK repeat units lie at residues 30–62 (DSNASFLRAARAGNLDKVVEYLKGGIDINTCNQ), 63–92 (NGLNALHLAAKEGHVGLVQELLGRGSSVDS), 96–125 (KGNTALHIASLAGQAEVVKVLVKEGANINA), 129–158 (NGFTPLYMAAQENHIDVVKYLLENGANQST), 162–191 (DGFTPLAVALQQGHNQAVAILLENDTKGKV), 193–220 (LPALHIAARKDDTKSAALLLQNDHNADV), 232–261 (SGFTPLHIAAHYGNVNVATLLLNRGAAVDF), 265–294 (NGITPLHVASKRGNTNMVKLLLDRGGQIDA), 298–327 (DGLTPLHCAARSGHDQVVELLLERGAPLLA), 331–360 (NGLSPLHMAAQGDHVECVKHLLQHKAPVDD), 364–393 (DYLTALHVAAHCGHYRVTKLLLDKRANPNA), 397–426 (NGFTPLHIACKKNRIKVMELLVKYGASIQA), 430–459 (SGLTPIHVAAFMGHLNIVLLLLQNGASPDV), 463–492 (RGETALHMAARAGQVEVVRCLLRNGALVDA), 496–525 (EEQTPLHIASRLGKTEIVQLLLQHMAHPDA), 529–558 (NGYTPLHISAREGQVDVASVLLEAGAAHSL), 562–591 (KGFTPLHVAAKYGSLDVAKLLLQRRAAADS), 595–624 (NGLTPLHVAAHYDNQKVALLLLEKGASPHA), 628–657 (NGYTPLHIAAKKNQMQIASTLLNYGAETNI), 661–690 (QGVTPLHLASQEGHTDMVTLLLDKGANIHM), 694–723 (SGLTSLHLAAQEDKVNVADILTKHGADQDA), 727–756 (LGYTPLIVACHYGNVKMVNFLLKQGANVNA), 760–789 (NGYTPLHQAAQQGHTHIINVLLQHGAKPNA), and 793–822 (NGNTALAIAKRLGYISVVDTLKVVTEEVTT). 2 positions are modified to phosphoserine: Ser31 and Ser34. At Tyr378 the chain carries Phosphotyrosine. Tyr531 is subject to Phosphotyrosine. At Ser846 the chain carries Phosphoserine. At Thr853 the chain carries Phosphothreonine. Ser874 is modified (phosphoserine). The interaction with SPTBN1 stretch occupies residues 966–1125 (SGFLVSFMVD…ELNEILNGMD (160 aa)). ZU5 domains are found at residues 968 to 1156 (FLVS…VVSR) and 1158 to 1304 (KQDS…LIDC). The tract at residues 1289–1423 (VSFTTNVSAR…FVKVRDTTQE (135 aa)) is UPA domain. Position 1382 is a phosphotyrosine (Tyr1382). One can recognise a Death 1 domain in the interval 1450–1535 (ITLPIYTKES…SDKAGSIKVK (86 aa)). Positions 1457–1486 (KESESDQEQEEEIDMTSEKNDETESTETSV) are disordered. Phosphoserine occurs at positions 1459, 1461, 1473, 1500, and 1596. Residues 1461 to 1471 (SDQEQEEEIDM) are compositionally biased toward acidic residues. 7 disordered regions span residues 1670–2137 (AVGR…TDFS), 2197–2411 (ALDG…GLEL), 2430–2484 (AVSH…GIFP), 2507–2586 (SRLL…TPEE), 2604–2852 (EAKQ…SLPH), 2864–2904 (DISA…TDRF), and 2923–2951 (QITSPYENVPSQSFFSSEESKTQTDANHT). Composition is skewed to basic and acidic residues over residues 1674–1683 (SSEKEGKDIP) and 1711–1733 (KQKQKEEGLQASAEKAELKKGSS). 3 positions are modified to phosphoserine: Ser1732, Ser1733, and Ser1736. Positions 1766-1783 (IKDKVKALQKRVEDEQKG) are enriched in basic and acidic residues. 7 Repeat A repeats span residues 1806-1817 (HPAASPSLKSER), 1818-1829 (HAPGSPSPKTER), 1830-1841 (HSTLSSSAKTER), 1842-1853 (HPPVSPSSKTEK), 1854-1865 (HSPVSPSAKTER), 1866-1877 (HSPASSSSKTEK), and 1878-1889 (HSPVSPSTKTER). The repeat-rich region stretch occupies residues 1806 to 1983 (HPAASPSLKS…PVSPTSKTER (178 aa)). 2 positions are modified to phosphoserine: Ser1855 and Ser1858. Composition is skewed to basic and acidic residues over residues 1886 to 1902 (KTERHSPVSSTKTERHP) and 1921 to 1937 (RTEKHPPVSPGRTEKRL). The Repeat A; approximate repeat unit spans residues 1890–1900 (HSPVSSTKTER). Repeat A repeat units follow at residues 1901–1912 (HPPVSPSGKTDK) and 1913–1924 (RPPVSPSGRTEK). Residues 1925–1935 (HPPVSPGRTEK) form a Repeat A; approximate repeat. Ser1929 carries the phosphoserine modification. Repeat A repeat units follow at residues 1936 to 1947 (RLPVSPSGRTDK), 1948 to 1959 (HQPVSTAGKTEK), 1960 to 1971 (HLPVSPSGKTEK), and 1972 to 1983 (QPPVSPTSKTER). 4 stretches are compositionally biased toward basic and acidic residues: residues 1980-1994 (KTERIEETMSVRELM), 2003-2034 (PSKHKTGLFEHKSAKQKQPQEKGKVRVEKEKG), 2075-2093 (VKKEDAAGGKEKVLSHKIP), and 2102-2117 (EESHRESEVPKEKMAD). Phosphoserine is present on Ser2127. Residues 2128 to 2137 (PDRKTSTDFS) are compositionally biased toward basic and acidic residues. Position 2239 is a phosphothreonine (Thr2239). Over residues 2240–2251 (PETSPESLSFSP) the composition is skewed to polar residues. Ser2243 carries the phosphoserine modification. Over residues 2252 to 2282 (KKSEEQTGETKESTKTETTTEIRSEKEHPTT) the composition is skewed to basic and acidic residues. Thr2269 bears the Phosphothreonine mark. At Ser2275 the chain carries Phosphoserine. Residues 2355–2376 (TFGSSAHKTQTDSEVQESTATS) are compositionally biased toward polar residues. Residues Ser2405, Ser2440, Ser2454, Ser2516, and Ser2521 each carry the phosphoserine modification. Over residues 2523–2545 (EQTSLMESSGKSPLSPDTPSSEE) the composition is skewed to polar residues. 2 stretches are compositionally biased toward basic and acidic residues: residues 2576 to 2586 (NGEKKRFTPEE) and 2604 to 2619 (EAKQKRDYKKEPKQEE). Position 2583 is a phosphothreonine (Thr2583). 2 positions are modified to phosphoserine: Ser2679 and Ser2701. Residues 2696 to 2705 (PSSMDSNSSP) are compositionally biased toward low complexity. Residues 2729–2776 (EPGKSEEEKDSESHLAEDRHAVSTEAEDRSYDKLNRDTDQPKICDGHG) show a composition bias toward basic and acidic residues. Phosphoserine is present on residues Ser2781 and Ser2795. Low complexity predominate over residues 2781-2791 (SPSSSAAPVSS). Positions 2892 to 2903 (SQDSSITTQTDR) are enriched in polar residues. Phosphoserine is present on Ser2956. 3 disordered regions span residues 2987–3016 (NFEGQDIKMESQQESTLWEMQSDSVSSSFE), 3069–3099 (LMVDRQSQGTTPDTTPARTPTEEGTPTSEQN), and 3136–3462 (QESR…PTKE). Polar residues predominate over residues 2998 to 3016 (QQESTLWEMQSDSVSSSFE). Residue Ser3075 is modified to Phosphoserine. At Thr3078 the chain carries Phosphothreonine. Residues 3078–3087 (TTPDTTPART) show a composition bias toward low complexity. A compositionally biased stretch (polar residues) spans 3090–3099 (EEGTPTSEQN). The span at 3137–3149 (ESREETLSEDVKE) shows a compositional bias: basic and acidic residues. A compositionally biased stretch (low complexity) spans 3157 to 3169 (LPLETSAESLALS). Positions 3175–3194 (VDDEADLLPDDVSEEVEEIP) are enriched in acidic residues. Polar residues-rich tracts occupy residues 3198-3212 (AQLNSQMGISASTET) and 3256-3265 (LDFSTLTRSV). Phosphoserine occurs at positions 3273, 3276, and 3277. The span at 3335–3344 (EENKADEAKP) shows a compositional bias: basic and acidic residues. Polar residues predominate over residues 3357 to 3374 (VEQQLSDLDTSVQKTVAP). Phosphoserine occurs at positions 3390 and 3409. A compositionally biased stretch (basic and acidic residues) spans 3409 to 3423 (SYTETETESRERAEE). Residues 3446–3460 (SRSTTSSCRGGTSPT) are compositionally biased toward low complexity. Ser3474 is subject to Phosphoserine. One can recognise a Death 2 domain in the interval 3569 to 3653 (IEERLAYIAD…DIVHLMETNT (85 aa)). Phosphoserine is present on Ser3735. 4 positions are modified to phosphothreonine: Thr3776, Thr3797, Thr3803, and Thr3814. The disordered stretch occupies residues 3777-3858 (PGTETSETQK…VESADNQPET (82 aa)). A Phosphoserine modification is found at Ser3823. The segment covering 3832–3841 (PSEHREESSP) has biased composition (basic and acidic residues). Phosphoserine is present on Ser3909.

As to quaternary structure, interacts with RHBG and SPTBN1. Colocalizes with Na/K ATPase, Na/Ca exchanger and SPTBN1. Directly interacts with DMD; this interaction is necessary for DMD localization at the sarcolemma. Interacts with DCTN4; this interaction is required for DCTN4 retention at costameres. Identified in complexes that contain VIM, EZR, AHNAK, BFSP1, BFSP2, ANK2, PLEC, PRX and spectrin. Interacts (via death domain) with RABGAP1L (via Rab-GAP TBC domain). Phosphorylated at multiple sites by different protein kinases and each phosphorylation event regulates the protein's structure and function. As to expression, present in plasma membrane of neurons as well as glial cells throughout the brain. Expressed in fetal brain and in temporal cortex of adult brain. Also expressed in the inner segments of rod photoreceptors in retina.

Its subcellular location is the cytoplasm. It is found in the cytoskeleton. The protein resides in the membrane. The protein localises to the myofibril. It localises to the sarcomere. Its subcellular location is the m line. It is found in the apical cell membrane. The protein resides in the cell membrane. The protein localises to the postsynaptic cell membrane. It localises to the early endosome. Its subcellular location is the recycling endosome. It is found in the lysosome. The protein resides in the mitochondrion. The protein localises to the z line. It localises to the sarcolemma. Its subcellular location is the T-tubule. In terms of biological role, plays an essential role in the localization and membrane stabilization of ion transporters and ion channels in several cell types, including cardiomyocytes, as well as in striated muscle cells. In skeletal muscle, required for proper localization of DMD and DCTN4 and for the formation and/or stability of a special subset of microtubules associated with costameres and neuromuscular junctions. In cardiomyocytes, required for coordinate assembly of Na/Ca exchanger, SLC8A1/NCX1, Na/K ATPases ATP1A1 and ATP1A2 and inositol 1,4,5-trisphosphate (InsP3) receptors at sarcoplasmic reticulum/sarcolemma sites. Required for expression and targeting of SPTBN1 in neonatal cardiomyocytes and for the regulation of neonatal cardiomyocyte contraction rate. In the inner segment of rod photoreceptors, required for the coordinated expression of the Na/K ATPase, Na/Ca exchanger and beta-2-spectrin (SPTBN1). Plays a role in endocytosis and intracellular protein transport. Associates with phosphatidylinositol 3-phosphate (PI3P)-positive organelles and binds dynactin to promote long-range motility of cells. Recruits RABGAP1L to (PI3P)-positive early endosomes, where RABGAP1L inactivates RAB22A, and promotes polarized trafficking to the leading edge of the migrating cells. Part of the ANK2/RABGAP1L complex which is required for the polarized recycling of fibronectin receptor ITGA5 ITGB1 to the plasma membrane that enables continuous directional cell migration. The protein is Ankyrin-2 (ANK2) of Homo sapiens (Human).